The chain runs to 97 residues: Stefin-1 (97 aa).

Residues 46-50 carry the Secondary area of contact motif; sequence QVVAG.

The protein belongs to the cystatin family.

It is found in the cytoplasm. In terms of biological role, this is an intracellular thiol proteinase inhibitor. This is Stefin-1 (Stfa1) from Mus musculus (Mouse).